A 106-amino-acid polypeptide reads, in one-letter code: Small ribosomal subunit protein uS10 (106 aa).

This sequence belongs to the universal ribosomal protein uS10 family. As to quaternary structure, part of the 30S ribosomal subunit.

Its function is as follows. Involved in the binding of tRNA to the ribosomes. The sequence is that of Small ribosomal subunit protein uS10 from Solibacter usitatus (strain Ellin6076).